A 505-amino-acid polypeptide reads, in one-letter code: Transcription factor APG (505 aa).

Disordered stretches follow at residues 1–40 (MLRG…CSAA), 61–99 (GAAN…DTAP), 119–156 (PAAA…SGGG), 169–242 (PLQQ…APTT), 256–312 (AQRL…SQDE), 324–344 (RRSA…NLSE), and 469–505 (PPPP…VKQA). The segment covering 23–33 (PLRPPPPPPFQ) has biased composition (pro residues). The segment covering 131–144 (CSSSHGAVVPSTSA) has biased composition (polar residues). The segment covering 174–199 (PSGGETASASASAAATSTVPVESTVV) has biased composition (low complexity). Residues 200 to 212 (QAATNRLRSTPLF) are compositionally biased toward polar residues. Pro residues predominate over residues 222–239 (PPKPSPRAAAPPPPPPLA). Positions 288–299 (GDRRQLNWRDSH) are enriched in basic and acidic residues. Residues 300 to 310 (NNQSAEWSASQ) show a composition bias toward polar residues. Over residues 324 to 334 (RRSAARSSKRS) the composition is skewed to basic residues. Positions 335-344 (RTAEVHNLSE) are enriched in basic and acidic residues. The region spanning 335 to 384 (RTAEVHNLSERRRRDRINEKMRALQELIPNCNKIDKASMLEEAIEYLKTL) is the bHLH domain. Residues 492–505 (GAADAGNAPAVKQA) are compositionally biased toward low complexity.

The protein belongs to the bHLH protein family. As to quaternary structure, homodimer and heterodimer with ILI5 or ILI6.

It is found in the nucleus. In terms of biological role, atypical bHLH transcription factor that acts as a negative regulator of grain size. Binds the transcription factor ILI6 and forms a heterodimer of antagonistic bHLH transcription factors that regulates grain length and weight by controlling cell elongation in lemma and palea. May be involved in the control of lamina inclination through brassinosteroid signaling pathway. The polypeptide is Transcription factor APG (APG) (Oryza sativa subsp. japonica (Rice)).